A 508-amino-acid polypeptide reads, in one-letter code: Maturase K (508 aa).

It belongs to the intron maturase 2 family. MatK subfamily.

The protein localises to the plastid. The protein resides in the chloroplast. Functionally, usually encoded in the trnK tRNA gene intron. Probably assists in splicing its own and other chloroplast group II introns. The protein is Maturase K of Manilkara zapota (Sapodilla plum).